A 60-amino-acid chain; its full sequence is UPF0434 protein NMC0623 (60 aa).

It belongs to the UPF0434 family.

The protein is UPF0434 protein NMC0623 of Neisseria meningitidis serogroup C / serotype 2a (strain ATCC 700532 / DSM 15464 / FAM18).